Reading from the N-terminus, the 377-residue chain is Erythronate-4-phosphate dehydrogenase (377 aa).

Serine 59 and threonine 81 together coordinate substrate. An NAD(+)-binding site is contributed by aspartate 162. The active site involves arginine 237. An NAD(+)-binding site is contributed by aspartate 260. Glutamate 265 is a catalytic residue. Histidine 282 (proton donor) is an active-site residue. Glycine 285 contributes to the NAD(+) binding site. Residue tyrosine 286 coordinates substrate.

It belongs to the D-isomer specific 2-hydroxyacid dehydrogenase family. PdxB subfamily. As to quaternary structure, homodimer.

Its subcellular location is the cytoplasm. The enzyme catalyses 4-phospho-D-erythronate + NAD(+) = (R)-3-hydroxy-2-oxo-4-phosphooxybutanoate + NADH + H(+). Its pathway is cofactor biosynthesis; pyridoxine 5'-phosphate biosynthesis; pyridoxine 5'-phosphate from D-erythrose 4-phosphate: step 2/5. Functionally, catalyzes the oxidation of erythronate-4-phosphate to 3-hydroxy-2-oxo-4-phosphonooxybutanoate. The sequence is that of Erythronate-4-phosphate dehydrogenase from Psychrobacter arcticus (strain DSM 17307 / VKM B-2377 / 273-4).